The following is a 77-amino-acid chain: DNA-directed RNA polymerase subunit Rpo5 (77 aa).

The protein belongs to the archaeal Rpo5/eukaryotic RPB5 RNA polymerase subunit family. Part of the RNA polymerase complex.

It localises to the cytoplasm. It catalyses the reaction RNA(n) + a ribonucleoside 5'-triphosphate = RNA(n+1) + diphosphate. DNA-dependent RNA polymerase (RNAP) catalyzes the transcription of DNA into RNA using the four ribonucleoside triphosphates as substrates. This Methanothermobacter thermautotrophicus (strain ATCC 29096 / DSM 1053 / JCM 10044 / NBRC 100330 / Delta H) (Methanobacterium thermoautotrophicum) protein is DNA-directed RNA polymerase subunit Rpo5.